Consider the following 253-residue polypeptide: Ubiquinone biosynthesis O-methyltransferase (253 aa).

Residues R41, G72, D93, and L136 each coordinate S-adenosyl-L-methionine.

This sequence belongs to the methyltransferase superfamily. UbiG/COQ3 family.

The enzyme catalyses a 3-demethylubiquinol + S-adenosyl-L-methionine = a ubiquinol + S-adenosyl-L-homocysteine + H(+). It carries out the reaction a 3-(all-trans-polyprenyl)benzene-1,2-diol + S-adenosyl-L-methionine = a 2-methoxy-6-(all-trans-polyprenyl)phenol + S-adenosyl-L-homocysteine + H(+). It participates in cofactor biosynthesis; ubiquinone biosynthesis. O-methyltransferase that catalyzes the 2 O-methylation steps in the ubiquinone biosynthetic pathway. This is Ubiquinone biosynthesis O-methyltransferase from Azorhizobium caulinodans (strain ATCC 43989 / DSM 5975 / JCM 20966 / LMG 6465 / NBRC 14845 / NCIMB 13405 / ORS 571).